The primary structure comprises 87 residues: Acyl-CoA-binding protein (87 aa).

At Ser2 the chain carries N-acetylserine. An ACB domain is found at 2–87 (SQAEFEKAAE…VEELKQKYGI (86 aa)). Lys8 bears the N6-acetyllysine; alternate mark. At Lys8 the chain carries N6-succinyllysine; alternate. Lys14 is a binding site for an acyl-CoA. At Lys17 the chain carries N6-succinyllysine. An N6-acetyllysine modification is found at Lys19. Tyr29 carries the phosphotyrosine modification. An acyl-CoA-binding positions include 29-33 (YSHYK), Lys51, Lys55, and Tyr74. N6-acetyllysine is present on Lys51. N6-acetyllysine; alternate is present on Lys55. Lys55 is subject to N6-succinyllysine; alternate. N6-(2-hydroxyisobutyryl)lysine; alternate is present on Lys55. Lys55 bears the N6-malonyllysine; alternate mark. Lys77 is subject to N6-acetyllysine; alternate. Residue Lys77 is modified to N6-succinyllysine; alternate.

The protein belongs to the ACBP family. In terms of assembly, monomer.

The protein localises to the endoplasmic reticulum. The protein resides in the golgi apparatus. Functionally, binds medium- and long-chain acyl-CoA esters with very high affinity and may function as an intracellular carrier of acyl-CoA esters. It is also able to displace diazepam from the benzodiazepine (BZD) recognition site located on the GABA type A receptor. It is therefore possible that this protein also acts as a neuropeptide to modulate the action of the GABA receptor. This chain is Acyl-CoA-binding protein (DBI), found in Oryctolagus cuniculus (Rabbit).